Here is a 239-residue protein sequence, read N- to C-terminus: Carboxy-S-adenosyl-L-methionine synthase (239 aa).

Residues tyrosine 35, 64–66 (GCS), 88–89 (DN), and arginine 195 each bind S-adenosyl-L-methionine.

The protein belongs to the class I-like SAM-binding methyltransferase superfamily. Cx-SAM synthase family. Homodimer.

The enzyme catalyses prephenate + S-adenosyl-L-methionine = carboxy-S-adenosyl-L-methionine + 3-phenylpyruvate + H2O. Its function is as follows. Catalyzes the conversion of S-adenosyl-L-methionine (SAM) to carboxy-S-adenosyl-L-methionine (Cx-SAM). This Helicobacter pylori (strain Shi470) protein is Carboxy-S-adenosyl-L-methionine synthase.